Here is a 599-residue protein sequence, read N- to C-terminus: Elongation factor 4 (599 aa).

The tr-type G domain maps to 2 to 184; the sequence is KHIRNFSIIA…RLVRDIPPPE (183 aa). GTP is bound by residues 14 to 19 and 131 to 134; these read DHGKST and NKID.

The protein belongs to the TRAFAC class translation factor GTPase superfamily. Classic translation factor GTPase family. LepA subfamily.

The protein localises to the cell inner membrane. It catalyses the reaction GTP + H2O = GDP + phosphate + H(+). Required for accurate and efficient protein synthesis under certain stress conditions. May act as a fidelity factor of the translation reaction, by catalyzing a one-codon backward translocation of tRNAs on improperly translocated ribosomes. Back-translocation proceeds from a post-translocation (POST) complex to a pre-translocation (PRE) complex, thus giving elongation factor G a second chance to translocate the tRNAs correctly. Binds to ribosomes in a GTP-dependent manner. In Pectobacterium carotovorum subsp. carotovorum (strain PC1), this protein is Elongation factor 4.